We begin with the raw amino-acid sequence, 102 residues long: Urease subunit beta (102 aa).

This sequence belongs to the urease beta subunit family. As to quaternary structure, heterotrimer of UreA (gamma), UreB (beta) and UreC (alpha) subunits. Three heterotrimers associate to form the active enzyme.

The protein localises to the cytoplasm. It catalyses the reaction urea + 2 H2O + H(+) = hydrogencarbonate + 2 NH4(+). It participates in nitrogen metabolism; urea degradation; CO(2) and NH(3) from urea (urease route): step 1/1. The polypeptide is Urease subunit beta (Methylibium petroleiphilum (strain ATCC BAA-1232 / LMG 22953 / PM1)).